The sequence spans 591 residues: Protein NRT1/ PTR FAMILY 1.1 (591 aa).

The next 11 helical transmembrane spans lie at 68-88 (TVLFMWVAATNFMPLVGAFLS), 98-118 (IVIASLSSLLGMVVLWLTAML), 139-159 (SSQLALLYTAFALISIGSGGI), 186-206 (FFGWYYASSSVAVLIAFTVIV), 216-236 (IGFGIPAILMLLAGFLFVFAS), 329-349 (LKALVKVIPVWSTGIMMSINV), 374-394 (IPAGSFGMFTIIALISWVVLY), 418-438 (MGLGLFISFLAMAVSATVEHY), 460-480 (AMWLVPQYVLHGLAEALTGIG), 496-516 (IAASLFGLGMAVANILASVIL), and 543-563 (YYWVLAILSFVNVIYYVVCSW).

The protein belongs to the major facilitator superfamily. Proton-dependent oligopeptide transporter (POT/PTR) (TC 2.A.17) family. Expressed in siliques, shoots and roots. Mainly detected in larger expanded leaves, in the companion cells of major veins.

The protein localises to the cell membrane. Its function is as follows. Low-affinity nitrate transporter involved in xylem-to-phloem transfer for redistributing nitrate into developing leaves. Not involved in dipeptides transport. This is Protein NRT1/ PTR FAMILY 1.1 (NPF1.1) from Arabidopsis thaliana (Mouse-ear cress).